Reading from the N-terminus, the 209-residue chain is Imidazole glycerol phosphate synthase subunit HisH (209 aa).

The 205-residue stretch at 1–205 folds into the Glutamine amidotransferase type-1 domain; sequence MIAIIDYGMG…QGVVEAWKSS (205 aa). The active-site Nucleophile is the Cys-79. Residues His-180 and Glu-182 contribute to the active site.

As to quaternary structure, heterodimer of HisH and HisF.

The protein resides in the cytoplasm. The catalysed reaction is 5-[(5-phospho-1-deoxy-D-ribulos-1-ylimino)methylamino]-1-(5-phospho-beta-D-ribosyl)imidazole-4-carboxamide + L-glutamine = D-erythro-1-(imidazol-4-yl)glycerol 3-phosphate + 5-amino-1-(5-phospho-beta-D-ribosyl)imidazole-4-carboxamide + L-glutamate + H(+). It carries out the reaction L-glutamine + H2O = L-glutamate + NH4(+). The protein operates within amino-acid biosynthesis; L-histidine biosynthesis; L-histidine from 5-phospho-alpha-D-ribose 1-diphosphate: step 5/9. In terms of biological role, IGPS catalyzes the conversion of PRFAR and glutamine to IGP, AICAR and glutamate. The HisH subunit catalyzes the hydrolysis of glutamine to glutamate and ammonia as part of the synthesis of IGP and AICAR. The resulting ammonia molecule is channeled to the active site of HisF. The polypeptide is Imidazole glycerol phosphate synthase subunit HisH (Bacillus cereus (strain ATCC 14579 / DSM 31 / CCUG 7414 / JCM 2152 / NBRC 15305 / NCIMB 9373 / NCTC 2599 / NRRL B-3711)).